We begin with the raw amino-acid sequence, 206 residues long: FMN-dependent NADH:quinone oxidoreductase 1 (206 aa).

FMN contacts are provided by residues Ser9, 15–17, and 139–142; these read SVS and SRGG.

Belongs to the azoreductase type 1 family. Homodimer. It depends on FMN as a cofactor.

The enzyme catalyses 2 a quinone + NADH + H(+) = 2 a 1,4-benzosemiquinone + NAD(+). It carries out the reaction N,N-dimethyl-1,4-phenylenediamine + anthranilate + 2 NAD(+) = 2-(4-dimethylaminophenyl)diazenylbenzoate + 2 NADH + 2 H(+). Its function is as follows. Quinone reductase that provides resistance to thiol-specific stress caused by electrophilic quinones. Functionally, also exhibits azoreductase activity. Catalyzes the reductive cleavage of the azo bond in aromatic azo compounds to the corresponding amines. The polypeptide is FMN-dependent NADH:quinone oxidoreductase 1 (Cupriavidus pinatubonensis (strain JMP 134 / LMG 1197) (Cupriavidus necator (strain JMP 134))).